A 507-amino-acid polypeptide reads, in one-letter code: Protoheme IX farnesyltransferase, mitochondrial (507 aa).

A compositionally biased stretch (low complexity) spans 72–90; it reads STSASASTTHDSTLSSSPT. The disordered stretch occupies residues 72-136; it reads STSASASTTH…RGEKPLPPDA (65 aa). The segment covering 99–111 has biased composition (basic residues); the sequence is KDHKIAPHRKRQA. The next 8 helical transmembrane spans lie at 166-186, 199-219, 248-268, 270-290, 298-318, 339-359, 392-412, and 441-461; these read LTML…VPEM, PLTL…ANAL, AAVL…YFGV, PTVS…YTPL, TWIG…AAAG, IGGW…FMAL, FVFI…WSFA, and GLFW…LLHK.

Belongs to the UbiA prenyltransferase family.

The protein localises to the mitochondrion membrane. It carries out the reaction heme b + (2E,6E)-farnesyl diphosphate + H2O = Fe(II)-heme o + diphosphate. Its function is as follows. Converts protoheme IX and farnesyl diphosphate to heme O. In Gibberella zeae (strain ATCC MYA-4620 / CBS 123657 / FGSC 9075 / NRRL 31084 / PH-1) (Wheat head blight fungus), this protein is Protoheme IX farnesyltransferase, mitochondrial (COX10).